The following is a 38-amino-acid chain: Potassium channel toxin alpha-KTx 2.3 (38 aa).

3 cysteine pairs are disulfide-bonded: Cys-7–Cys-29, Cys-13–Cys-34, and Cys-17–Cys-36.

This sequence belongs to the short scorpion toxin superfamily. Potassium channel inhibitor family. Alpha-KTx 02 subfamily. As to expression, expressed by the venom gland.

Its subcellular location is the secreted. In terms of biological role, inhibitor of voltage-gated potassium channels (Kv). It is capable of displacing the binding of radio-labeled noxiustoxin (AC P08815) to rat brain synaptosomes with high affinity (about 100 pM). It is also capable of inhibiting transient potassium-currents (resembling I(A)-type currents), in cultured rat cerebellar granule cells. About 50% of the peak currents are reduced by application of a 1.5 uM solution of this toxin. The sequence is that of Potassium channel toxin alpha-KTx 2.3 from Centruroides limpidus (Mexican scorpion).